We begin with the raw amino-acid sequence, 857 residues long: Dynein regulatory complex protein 11 (857 aa).

In terms of domain architecture, IQ spans 206 to 235 (TKLAALQIQKVWRGFHQCKKTVKEREEEMV). Residues 348–388 (EEKLKKKKKKEDKENKGKKGKKEKKEKKEKKVSLKEKAMKD) are disordered. A compositionally biased stretch (basic residues) spans 365-375 (KKGKKEKKEKK). Over residues 376–387 (EKKVSLKEKAMK) the composition is skewed to basic and acidic residues. Position 598 to 605 (598 to 605 (GPSGVGKK)) interacts with ATP. Residues 834-857 (SLTVGNKEKEKDKGKKGKRGKKKK) form a disordered region. Over residues 847-857 (GKKGKRGKKKK) the composition is skewed to basic residues.

It belongs to the AAA ATPase family. DRC11 subfamily. In terms of assembly, component of the nexin-dynein regulatory complex (N-DRC).

It localises to the cytoplasm. The protein resides in the cytoskeleton. It is found in the flagellum axoneme. Functionally, component of the nexin-dynein regulatory complex (N-DRC), a key regulator of ciliary/flagellar motility which maintains the alignment and integrity of the distal axoneme and regulates microtubule sliding in motile axonemes. This chain is Dynein regulatory complex protein 11 (Iqca1), found in Mus musculus (Mouse).